Consider the following 142-residue polypeptide: MATKIDKEACRAAYNLVRDDGSAVIWVTFKYDGSTIVPGEQGAEYQHFIQQCTDDVRLFAFVRFTTGDAMSKRSKFALITWIGENVSGLQRAKTGTDKTLVKEVVQNFAKEFVISDRKELEEDFIKSELKKAGGANYDAQTE.

Ala-2 carries the post-translational modification N-acetylalanine. In terms of domain architecture, ADF-H spans 2–130 (ATKIDKEACR…EEDFIKSELK (129 aa)). A flexible and important for F-actin binding region spans residues 66–75 (TGDAMSKRSK). Residues Lys-102 and Lys-126 each carry the N6-acetyllysine modification.

The protein belongs to the actin-binding proteins ADF family. Coactosin subfamily. In terms of assembly, interacts with 5-lipoxygenase (ALOX5/5LO) in a calcium-independent manner. Binds to F-actin with a stoichiometry of 1:2. Widely expressed with highest levels in placenta, lung, kidney and peripheral blood leukocytes and lower levels in brain, liver and pancreas.

The protein localises to the cytoplasm. It localises to the cytoskeleton. The protein resides in the nucleus. Functionally, binds to F-actin in a calcium-independent manner. Has no direct effect on actin depolymerization. Acts as a chaperone for ALOX5 (5LO), influencing both its stability and activity in leukotrienes synthesis. This Homo sapiens (Human) protein is Coactosin-like protein (COTL1).